Reading from the N-terminus, the 42-residue chain is Lanthionine-containing peptide SapB precursor RamS (42 aa).

A propeptide spanning residues 1–21 (MNLFDLQSMETPKEEAMGDVE) is cleaved from the precursor. Residues 1–21 (MNLFDLQSMETPKEEAMGDVE) are disordered. Cross-links (lanthionine (Ser-Cys)) lie at residues 24-31 (SRASLLLC) and 34-41 (SSLSITTC). Ser-27 and Ser-37 each carry 2,3-didehydroalanine (Ser).

It belongs to the lanthionine-containing morphogen family. In terms of processing, maturation involves the enzymatic conversion of Ser into dehydrated AA and the formation of thioether bonds with cysteine, probably by RamC. This is followed by membrane translocation and cleavage of the modified precursor. The RamS precursor protein (detected by an anti-propeptide antibody and by a C-terminal His-tag) is detected from at least 16 hours post-germination; its apparent molecular weight decreases starting from about 34 hours, when its probable modifying enzyme ramC is transcribed. Surfactin, a B.subtilis cyclic lipopeptide antibiotic which prevents aerial hyphae formation in S.coelicolor, decreases localization of RamS precursor protein to the cell membrane, suggesting that processing only occurs at the cell membrane.

It is found in the cell membrane. The protein resides in the secreted. The protein localises to the spore wall. Its function is as follows. Stably accumulated precursor of SapB. Lanthionine-containing peptide devoid of antibiotic properties. A surface active peptide involved in the efficient formation of aerial mycelium when cells are grown in rich media. Has an overlapping function with the surface-active chaplin proteins; chaplins are essential on minimal medium while on rich medium both chaplins and SapB are required for efficient aerial hyphae formation. Required under conditions of high osmolarity where it may change the physical properties of the chaplin layer to allow hyphae to grow into air. Suggested to self-assemble at air-water interfaces, thus providing a film of surfactant through which nascent aerial hyphae can emerge; the aerial hyphae differentiate further into spores. Application to bald mutants (bld, unable to make aerial hyphae) restores hyphae growth. Application to chaplin negative mutants as well as ramC-ramS-ramA-ramB and ramR deletions also restores aerial hyphae growth and sporulation. Reduces surface tension of water from 72 to 30 mJ/m(2). The polypeptide is Lanthionine-containing peptide SapB precursor RamS (ramS) (Streptomyces coelicolor (strain ATCC BAA-471 / A3(2) / M145)).